Here is a 1146-residue protein sequence, read N- to C-terminus: Elicitor of plant defense protein 1 (1146 aa).

2 disordered regions span residues 25–75 (DPLP…RLSN) and 156–226 (ARPP…PRQG). Basic and acidic residues predominate over residues 164–177 (RAERIKAEDSDQSG). In terms of domain architecture, uDENN spans 246–500 (PLNTDPNMHP…NLCTEAFSPL (255 aa)). The region spanning 522 to 656 (VNEIPGSRTI…HRRKLHALLQ (135 aa)) is the cDENN domain. The 359-residue stretch at 658–1016 (AAPAKLRYGV…ERETKPGTTA (359 aa)) folds into the dDENN domain. The disordered stretch occupies residues 730 to 806 (LHSKVDPNKP…RRSSSFGVDK (77 aa)). Over residues 732–743 (SKVDPNKPDRPG) the composition is skewed to basic and acidic residues. A compositionally biased stretch (low complexity) spans 744–760 (TSKSTRTSPPSSVSPVS). The span at 769 to 783 (TPVSRSDSGFALTST) shows a compositional bias: polar residues. Positions 784–797 (LREKRSRNFDEKTR) are enriched in basic and acidic residues. The segment at 883 to 931 (GHCFNWEEGALSSSCSVCDDRAEGDGIYKCSGCSAFAHGRCLGCVSLAC) adopts a Phorbol-ester/DAG-type zinc-finger fold. The segment at 1121–1146 (PRPEQRGTRGLVRKQVPSMLGTSPTN) is disordered.

Belongs to the EPD1 elicitor family. Interacts with host cotton EIR5A (AC A0A5J5T2N2) and EIR5D (AC A0A5J5NT52) and host N.benthamiana EIR (AC P0DXJ0).

It localises to the secreted. It is found in the host cell. In terms of biological role, acts as an elicitor that triggers defense responses in both Nicotiana benthamiana and cotton plants. Triggers the accumulation of reactive oxygen species (ROS) and the activation of cell death in cotton plants. Induces significantly enhanced resistance of Nicotiana benthamiana to both the broad-host-range filamentous pathogen Botrytis cinerea and the semibiotrophic pathogen Phytophthora capsici. Stimulates the expression of EIR5A (AC A0A5J5T2N2) and EIR5D (AC A0A5J5NT52) in cotton plants and recognition of EPD1 potentiates EIRs to enhance cotton PAMP-triggered immunity (PTI). In Verticillium dahliae (strain VdLs.17 / ATCC MYA-4575 / FGSC 10137) (Verticillium wilt), this protein is Elicitor of plant defense protein 1.